Consider the following 308-residue polypeptide: Elongation factor Ts (308 aa).

The interval Thr-80–Val-83 is involved in Mg(2+) ion dislocation from EF-Tu.

This sequence belongs to the EF-Ts family.

The protein localises to the cytoplasm. Its function is as follows. Associates with the EF-Tu.GDP complex and induces the exchange of GDP to GTP. It remains bound to the aminoacyl-tRNA.EF-Tu.GTP complex up to the GTP hydrolysis stage on the ribosome. The polypeptide is Elongation factor Ts (Allorhizobium ampelinum (strain ATCC BAA-846 / DSM 112012 / S4) (Agrobacterium vitis (strain S4))).